Consider the following 358-residue polypeptide: Oligopeptide transport ATP-binding protein OppD (358 aa).

Residues 8–259 enclose the ABC transporter domain; sequence LEVKDLAISF…PRHPYTWGLL (252 aa). ATP is bound at residue 44–51; sequence GESGSGKS.

This sequence belongs to the ABC transporter superfamily. The complex is composed of two ATP-binding proteins (OppD and OppF), two transmembrane proteins (OppB and OppC) and a solute-binding protein (OppA).

Its subcellular location is the cell membrane. It catalyses the reaction a [peptide](out) + ATP + H2O = a [peptide](in) + ADP + phosphate + H(+). Its function is as follows. Part of the ABC transporter complex OppABCDF involved in the uptake of oligopeptides. Probably responsible for energy coupling to the transport system. Required for sporulation and genetic competence. This Bacillus subtilis (strain 168) protein is Oligopeptide transport ATP-binding protein OppD.